Consider the following 176-residue polypeptide: Adenylyl-sulfate kinase (176 aa).

12–19 (GLSGAGKT) contributes to the ATP binding site. S86 (phosphoserine intermediate) is an active-site residue.

Belongs to the APS kinase family.

It catalyses the reaction adenosine 5'-phosphosulfate + ATP = 3'-phosphoadenylyl sulfate + ADP + H(+). Its pathway is sulfur metabolism; hydrogen sulfide biosynthesis; sulfite from sulfate: step 2/3. In terms of biological role, catalyzes the synthesis of activated sulfate. This is Adenylyl-sulfate kinase from Synechococcus sp. (strain JA-3-3Ab) (Cyanobacteria bacterium Yellowstone A-Prime).